Here is a 133-residue protein sequence, read N- to C-terminus: Ribosome-binding factor A (133 aa).

Belongs to the RbfA family. In terms of assembly, monomer. Binds 30S ribosomal subunits, but not 50S ribosomal subunits or 70S ribosomes.

It is found in the cytoplasm. One of several proteins that assist in the late maturation steps of the functional core of the 30S ribosomal subunit. Associates with free 30S ribosomal subunits (but not with 30S subunits that are part of 70S ribosomes or polysomes). Required for efficient processing of 16S rRNA. May interact with the 5'-terminal helix region of 16S rRNA. The protein is Ribosome-binding factor A of Psychromonas ingrahamii (strain DSM 17664 / CCUG 51855 / 37).